We begin with the raw amino-acid sequence, 340 residues long: Pseudaminic acid synthase (340 aa).

The region spanning 281-337 (SLFVIKDIQKGEALTENNIKALRPNLGLHPKFYKEILGQKASKFLKANTPLSADDIE) is the AFP-like domain.

This sequence belongs to the pseudaminic acid synthase family. The cofactor is a divalent metal cation.

The catalysed reaction is 2,4-diacetamido-2,4,6-trideoxy-beta-L-altrose + phosphoenolpyruvate + H2O = pseudaminate + phosphate. Its function is as follows. Catalyzes the fifth step in the biosynthesis of pseudaminic acid, a sialic-acid-like sugar that is used to modify flagellin. Catalyzes the condensation of phosphoenolpyruvate with 2,4-diacetamido-2,4,6-trideoxy-beta-l-altropyranose, forming pseudaminic acid. The sequence is that of Pseudaminic acid synthase (pseI) from Helicobacter pylori (strain ATCC 700392 / 26695) (Campylobacter pylori).